Consider the following 364-residue polypeptide: tRNA 2-selenouridine synthase (364 aa).

The region spanning Leu-14–Trp-137 is the Rhodanese domain. Cys-97 (S-selanylcysteine intermediate) is an active-site residue.

It belongs to the SelU family. Monomer.

The catalysed reaction is 5-methylaminomethyl-2-thiouridine(34) in tRNA + selenophosphate + (2E)-geranyl diphosphate + H2O + H(+) = 5-methylaminomethyl-2-selenouridine(34) in tRNA + (2E)-thiogeraniol + phosphate + diphosphate. It carries out the reaction 5-methylaminomethyl-2-thiouridine(34) in tRNA + (2E)-geranyl diphosphate = 5-methylaminomethyl-S-(2E)-geranyl-thiouridine(34) in tRNA + diphosphate. The enzyme catalyses 5-methylaminomethyl-S-(2E)-geranyl-thiouridine(34) in tRNA + selenophosphate + H(+) = 5-methylaminomethyl-2-(Se-phospho)selenouridine(34) in tRNA + (2E)-thiogeraniol. It catalyses the reaction 5-methylaminomethyl-2-(Se-phospho)selenouridine(34) in tRNA + H2O = 5-methylaminomethyl-2-selenouridine(34) in tRNA + phosphate. Functionally, involved in the post-transcriptional modification of the uridine at the wobble position (U34) of tRNA(Lys), tRNA(Glu) and tRNA(Gln). Catalyzes the conversion of 2-thiouridine (S2U-RNA) to 2-selenouridine (Se2U-RNA). Acts in a two-step process involving geranylation of 2-thiouridine (S2U) to S-geranyl-2-thiouridine (geS2U) and subsequent selenation of the latter derivative to 2-selenouridine (Se2U) in the tRNA chain. In Salmonella enteritidis, this protein is tRNA 2-selenouridine synthase.